The primary structure comprises 137 residues: Large ribosomal subunit protein uL22c (137 aa).

This sequence belongs to the universal ribosomal protein uL22 family. As to quaternary structure, part of the 50S ribosomal subunit.

The protein resides in the plastid. It is found in the chloroplast. In terms of biological role, this protein binds specifically to 23S rRNA. Its function is as follows. The globular domain of the protein is located near the polypeptide exit tunnel on the outside of the subunit, while an extended beta-hairpin is found that lines the wall of the exit tunnel in the center of the 70S ribosome. This chain is Large ribosomal subunit protein uL22c (rpl22), found in Oenothera argillicola (Appalachian evening primrose).